We begin with the raw amino-acid sequence, 221 residues long: HTH-type transcriptional regulator McbR (221 aa).

The 68-residue stretch at 10-77 folds into the HTH gntR-type domain; the sequence is VSLTLQVEND…PAQAFTVPEV (68 aa). The segment at residues 37–56 is a DNA-binding region (H-T-H motif); the sequence is TKNLAEQLGMSITPVREALL.

Its function is as follows. Important for biofilm formation. Represses expression of McbA by binding to its promoter region, which prevents colanic acid overproduction and mucoidy. The sequence is that of HTH-type transcriptional regulator McbR (mcbR) from Escherichia coli (strain K12).